A 593-amino-acid chain; its full sequence is Regulatory protein NPR1 (593 aa).

A phosphoserine mark is found at Ser11, Ser15, Ser55, and Ser59. One can recognise a BTB domain in the interval 65-144 (SDAKLVLSDG…VYSSRVRPPP (80 aa)). Residues 147–161 (VSECADENCCHVACR) form a C2HC NPR-type zinc finger. Positions 150 and 155 each coordinate Zn(2+). Position 156 is an S-nitrosocysteine (Cys156). 2 residues coordinate Zn(2+): His157 and Cys160. 5 ANK repeats span residues 229-258 (KSNV…ELGL), 265-295 (KHVS…NLDD), 297-324 (CALH…DVNH), 328-357 (RGYT…SASE), and 361-397 (EGRT…CVEI). The SIM3, required fo binding to SUMO3 and subsequent sumoylation signature appears at 345–348 (ILSL). The interval 387 to 525 (HSLKGRLCVE…DQIMNCEDLT (139 aa)) is salicylic acid-binding core (SBC). A salicylate-binding site is contributed by Arg432. The short motif at 537-554 (KRLQKKQRYMEIQETLKK) is the Nuclear localization signal element. The segment at 563–593 (LGNSSLTDSTSSTSKSTGGKRSNRKLSHRRR) is disordered. A compositionally biased stretch (low complexity) spans 566–579 (SSLTDSTSSTSKST). Basic residues predominate over residues 583-593 (RSNRKLSHRRR).

It belongs to the plant 'ANKYRIN-BTB/POZ' family. 'NPR1-like' subfamily. Homodimer. Oligomer of dimers in an uninduced quiescent state; disulfide-linked. Forms activated (i.e. sumoylated) homodimers and monomers upon systemic acquired resistance (SAR) induction. Interacts with TGA1, TGA3, TGA4, TGA5, TGA6, TGA7 and with reduced forms of TGA1 and TGA4. Activated homodimer binds two TGA3 dimers in the presence of DNA via its ANK 2 repeat (265-295), thus forming a TGA3(2)-NPR1(2)-TGA3(2) complex in which NPR1 serves as a transcription cofactor by bridging two transcription factor complexes in an enhanceosome. Interacts with NIMIN-1 and NIMIN-3 via its C-terminal region, and with NIMIN-2 via its N-terminal region. Interacts with SUMO3 but not with SUMO1 and SUMO2; this interaction is required for phosphorylation at Ser-11 and Ser-15, and triggers activation by sumoylation and subsequent degradation. Binds to NPR3 and NPR4; these interactions are promoted by association of salicylic acid (SA) with NPR3, but disrupted by SA association with NPR4, probably due to conformational changes. Binds to CUL3A, a core component of the cullin-RING ubiquitin ligases (CRL); this interaction requires NPR3 and NPR4. Interacts with NPR2 independently of SA. Binds to WRKY70 when unmodified (i.e. not sumoylated). Phosphorylation at Ser-55 and Ser-59 prevents sumoylation to ensure stability and quiescence. Post-translationally, phosphorylated at Ser-11 and Ser-15 in the nucleus; facilitates its recruitment to a cullin3-based ubiquitin ligase leading to polyubiquitination and subsequent CUL3/CSN-mediated degradation. This phosphorylation at Ser-11 and Ser-15 requires interaction with SUMO3, and promotes in turn activation by sumoylation and subsequent degradation. In terms of processing, ubiquitinated. Sumoylated by SUMO3 independently of an E3 ligase to activate defense gene expression by switching from association with WRKY transcriptional repressors (e.g. WRKY70) to TGA transcriptional activators (e.g. TGA3). Sumoylation is inhibited by phosphorylation at Ser-55 and Ser-59, but seems to promote phosphorylation at Ser-11 and Ser-15. Sumoylation also triggers degradation, making immune induction transient. Post-translationally, the Cys-82-SH group reacts with Cys-216-SH of the other subunit to form an intermolecular disulfide. This disulfide might subsequently be reduced upon systemic acquired resistance (SAR) induction. In terms of processing, S-nitrosylation at Cys-156 facilitates its oligomerization.

The protein localises to the cytoplasm. Its subcellular location is the nucleus. It localises to the nuclear body. The protein operates within protein modification; protein ubiquitination. Functionally, salicylic acid (SA)-binding substrate-specific adapter of an E3 ubiquitin-protein ligase complex (CUL3-RBX1-BTB) which mediates the ubiquitination and subsequent proteasomal degradation of target proteins. Transcription cofactor that represses gene expression in the absence of salicylic acid (SA), when attached to negative cis-elements (W-box) with WRKY transcription factors (e.g. WRKY70), but stimulates gene expression upon activation by SA, when sumoylated and attached to positive cis-elements (as-1) with TGA transcription factors (e.g. TGA3), thus confering immunity through a series of gene regulations ending in a significant increase in antimicrobial and defense genes expression (e.g. PR-1 and PR-2). Binds to SA with low capacity; this leads to conformational changes. Key positive regulator of the SA-dependent signaling pathway that negatively regulates jasmonic acid (JA)-dependent signaling pathway. Controls the onset of systemic acquired resistance (SAR). Upon SAR induction, a biphasic change in cellular reduction potential occurs, resulting in reduction of the cytoplasmic oligomeric form to dimeric and monomeric forms, which accumulate in the nucleus and activate gene expression. Appears to control lesion expansion by acting as an inhibitor of programmed cell death (PCD) during effector-triggered immunity (ETI) that occurs in response to incompatible interaction with avirulent pathogenic bacteria (i.e. Pseudomonas syringae ES4326/avrRpt2) ending in a hypersensitive response (HR). Phosphorylated form is target of proteasome degradation. The polypeptide is Regulatory protein NPR1 (Arabidopsis thaliana (Mouse-ear cress)).